The primary structure comprises 350 residues: Nicotinate-nucleotide--dimethylbenzimidazole phosphoribosyltransferase (350 aa).

The Proton acceptor role is filled by Glu316.

Belongs to the CobT family.

It catalyses the reaction 5,6-dimethylbenzimidazole + nicotinate beta-D-ribonucleotide = alpha-ribazole 5'-phosphate + nicotinate + H(+). It participates in nucleoside biosynthesis; alpha-ribazole biosynthesis; alpha-ribazole from 5,6-dimethylbenzimidazole: step 1/2. Its function is as follows. Catalyzes the synthesis of alpha-ribazole-5'-phosphate from nicotinate mononucleotide (NAMN) and 5,6-dimethylbenzimidazole (DMB). This is Nicotinate-nucleotide--dimethylbenzimidazole phosphoribosyltransferase from Pseudomonas syringae pv. tomato (strain ATCC BAA-871 / DC3000).